A 358-amino-acid chain; its full sequence is Variant-surface-glycoprotein phospholipase C (358 aa).

In terms of domain architecture, PI-PLC X-box spans 25–198 (IGQVYMVGAH…STRRIFLVVR (174 aa)).

Monomer. Post-translationally, the N-terminus is blocked.

The protein resides in the membrane. The enzyme catalyses a 6-(alpha-D-glucosaminyl)-1-(1,2-diacyl-sn-glycero-3-phospho)-1D-myo-inositol = 6-(alpha-D-glucosaminyl)-1D-myo-inositol 1,2-cyclic phosphate + a 1,2-diacyl-sn-glycerol. By hydrolysis of the attached glycolipid, releases soluble variant surface glycoprotein containing phosphoinositol from the cell wall of T.brucei after cell lysis. It also cleaves similar membrane anchors on some mammalian proteins. VSG lipase may play a role in processes such as parasite differentiation or antigenic variation. This Trypanosoma brucei brucei protein is Variant-surface-glycoprotein phospholipase C.